The primary structure comprises 1093 residues: Leucine-rich repeats and immunoglobulin-like domains protein 1 (1093 aa).

The N-terminal stretch at 1-34 is a signal peptide; sequence MARPVRGGLGAPRRSPCLLLLWLLLLRLEPVTAA. Positions 35–68 constitute an LRRNT domain; sequence AGPRAPCAAACTCAGDSLDCGGRGLAALPGDLPS. The Extracellular segment spans residues 35-794; the sequence is AGPRAPCAAA…GCRKDGTTVG (760 aa). Residues Cys-45 and Cys-54 are joined by a disulfide bond. 15 LRR repeats span residues 69–90, 93–114, 116–137, 140–161, 164–185, 189–210, 212–233, 236–257, 260–281, 284–305, 308–329, 332–353, 356–378, 383–404, and 407–428; these read WTRS…GFED, NLQE…GAAS, HVVS…QLKA, SLEV…CFPH, PIKE…AFDG, SLLT…AFKL, RLTQ…TFQG, SLEV…AFWG, KMHV…SLYG, ALHQ…GWSF, KLHE…SLAE, SLSV…AFKG, SLRV…SGAF, SLSK…AFSG, and GLEH…AFVK. An N-linked (GlcNAc...) asparagine glycan is attached at Asn-74. N-linked (GlcNAc...) asparagine glycosylation is present at Asn-150. The N-linked (GlcNAc...) asparagine glycan is linked to Asn-246. N-linked (GlcNAc...) asparagine glycosylation is found at Asn-292 and Asn-318. Residues 440-491 form the LRRCT domain; that stretch reads DSFLCDCQLKWLPPWLIGRMLQAFVTATCAHPESLKGQSIFSVPPESFVCDD. 4 disulfide bridges follow: Cys-444-Cys-468, Cys-446-Cys-489, Cys-516-Cys-577, and Cys-620-Cys-672. Ig-like C2-type domains lie at 495 to 594, 599 to 688, and 693 to 779; these read PQII…ARLT, PSFT…ATLT, and PSLV…SQLS. Asn-684 carries an N-linked (GlcNAc...) asparagine glycan. Cys-714 and Cys-763 form a disulfide bridge. A helical transmembrane segment spans residues 795–815; sequence IFTIAVVSSIVLTSLVWVCII. The Cytoplasmic segment spans residues 816–1093; the sequence is YQTRKKSEEY…RVPLLLAPKS (278 aa). Disordered regions lie at residues 946–983 and 1063–1093; these read AFHP…CSRT and PKAC…APKS.

In terms of assembly, interacts (via extracellular LRR and Ig-like domains) with EGFR/ERBB1, ERBB2, ERBB3 and ERBB4 (via extracellular domain). The physiological relevance of the interaction is controversial; LRIG1 may have low affinity for EGFR, and interaction may occur only when high levels of both proteins are present. Widely expressed.

It is found in the cell membrane. Its function is as follows. Acts as a feedback negative regulator of signaling by receptor tyrosine kinases, through a mechanism that involves enhancement of receptor ubiquitination and accelerated intracellular degradation. This is Leucine-rich repeats and immunoglobulin-like domains protein 1 from Homo sapiens (Human).